We begin with the raw amino-acid sequence, 192 residues long: Adenine phosphoribosyltransferase (192 aa).

Belongs to the purine/pyrimidine phosphoribosyltransferase family. In terms of assembly, homodimer.

The protein localises to the cytoplasm. It carries out the reaction AMP + diphosphate = 5-phospho-alpha-D-ribose 1-diphosphate + adenine. It functions in the pathway purine metabolism; AMP biosynthesis via salvage pathway; AMP from adenine: step 1/1. Catalyzes a salvage reaction resulting in the formation of AMP, that is energically less costly than de novo synthesis. This is Adenine phosphoribosyltransferase from Corynebacterium efficiens (strain DSM 44549 / YS-314 / AJ 12310 / JCM 11189 / NBRC 100395).